Here is a 161-residue protein sequence, read N- to C-terminus: Cyclic pyranopterin monophosphate synthase (161 aa).

Substrate-binding positions include 75-77 (LCH) and 113-114 (ME). The active site involves Asp128.

Belongs to the MoaC family. As to quaternary structure, homohexamer; trimer of dimers.

It catalyses the reaction (8S)-3',8-cyclo-7,8-dihydroguanosine 5'-triphosphate = cyclic pyranopterin phosphate + diphosphate. It functions in the pathway cofactor biosynthesis; molybdopterin biosynthesis. Catalyzes the conversion of (8S)-3',8-cyclo-7,8-dihydroguanosine 5'-triphosphate to cyclic pyranopterin monophosphate (cPMP). The chain is Cyclic pyranopterin monophosphate synthase from Erwinia tasmaniensis (strain DSM 17950 / CFBP 7177 / CIP 109463 / NCPPB 4357 / Et1/99).